The chain runs to 252 residues: Gamma carbonic anhydrase-like 1, mitochondrial (252 aa).

Residues 1–29 constitute a mitochondrion transit peptide; sequence MATSIARLSRRGVTSNLIRRCFAAEAALA. Substrate-binding positions include 99-101 and 114-115; these read RGD and QE. Histidine 120 contributes to the Zn(2+) binding site. Substrate contacts are provided by arginine 148, glutamine 160, and tyrosine 227.

The protein belongs to the gamma-class carbonic anhydrase family. In terms of assembly, component of the mitochondrial oxidoreductase respiratory chain complex I; element of the extra matrix-exposed domain, which is attached to the membrane arm of this complex. Interacts with GAMMACA2.

It localises to the mitochondrion membrane. Involved in complex I assembly in mitochondria and respiration. The polypeptide is Gamma carbonic anhydrase-like 1, mitochondrial (GAMMACAL1) (Arabidopsis thaliana (Mouse-ear cress)).